An 88-amino-acid chain; its full sequence is Defensin-like protein 98 (88 aa).

The signal sequence occupies residues 1–29 (MGSLRVSTVVIAVVACLSILLISPTEVDG). Disulfide bonds link Cys33–Cys76, Cys40–Cys62, Cys46–Cys73, and Cys50–Cys75.

It belongs to the DEFL family.

Its subcellular location is the secreted. The sequence is that of Defensin-like protein 98 from Arabidopsis thaliana (Mouse-ear cress).